Reading from the N-terminus, the 812-residue chain is Probable phosphoketolase (812 aa).

This sequence belongs to the XFP family. It depends on thiamine diphosphate as a cofactor.

The protein is Probable phosphoketolase of Thermosynechococcus vestitus (strain NIES-2133 / IAM M-273 / BP-1).